Here is a 109-residue protein sequence, read N- to C-terminus: Prefoldin subunit 1 (109 aa).

Ser-2 carries the N-acetylserine modification.

Belongs to the prefoldin subunit beta family. In terms of assembly, heterohexamer of two PFD-alpha type and four PFD-beta type subunits.

Its subcellular location is the cytoplasm. In terms of biological role, binds specifically to cytosolic chaperonin (c-CPN) and transfers target proteins to it. Binds to nascent polypeptide chain and promotes folding in an environment in which there are many competing pathways for nonnative proteins. This Saccharomyces cerevisiae (strain ATCC 204508 / S288c) (Baker's yeast) protein is Prefoldin subunit 1 (PFD1).